The sequence spans 554 residues: Condensin-2 complex subunit H2 (554 aa).

A phosphoserine mark is found at Ser-45, Ser-178, Ser-182, Ser-199, and Ser-200. The interval 154–296 (PVDVHPMPRS…GQKRKRKGAT (143 aa)) is disordered. Polar residues predominate over residues 179 to 191 (RNGSPVSVRSISQ). Residues 201–210 (GDEDAEDVAE) are compositionally biased toward acidic residues. Position 441 is a phosphoserine (Ser-441).

It belongs to the CND2 H2 (condensin-2 subunit 2) family. As to quaternary structure, component of the condensin-2 complex, which contains the SMC2 and SMC4 heterodimer, and three non SMC subunits, NCAPG2, NCAPH2 and NCAPD3 that probably regulate the complex.

It is found in the nucleus. Regulatory subunit of the condensin-2 complex, a complex that seems to provide chromosomes with an additional level of organization and rigidity and in establishing mitotic chromosome architecture. May promote the resolution of double-strand DNA catenanes (intertwines) between sister chromatids. Condensin-mediated compaction likely increases tension in catenated sister chromatids, providing directionality for type II topoisomerase-mediated strand exchanges toward chromatid decatenation. Required for decatenation of chromatin bridges at anaphase. Early in neurogenesis, may play an essential role to ensure accurate mitotic chromosome condensation in neuron stem cells, ultimately affecting neuron pool and cortex size. Seems to have lineage-specific role in T-cell development. The sequence is that of Condensin-2 complex subunit H2 (Ncaph2) from Rattus norvegicus (Rat).